A 156-amino-acid polypeptide reads, in one-letter code: Ribosomal RNA large subunit methyltransferase H (156 aa).

S-adenosyl-L-methionine is bound by residues Leu-73, Gly-104, and 123–128 (LSALTL).

The protein belongs to the RNA methyltransferase RlmH family. In terms of assembly, homodimer.

The protein localises to the cytoplasm. It catalyses the reaction pseudouridine(1915) in 23S rRNA + S-adenosyl-L-methionine = N(3)-methylpseudouridine(1915) in 23S rRNA + S-adenosyl-L-homocysteine + H(+). In terms of biological role, specifically methylates the pseudouridine at position 1915 (m3Psi1915) in 23S rRNA. The polypeptide is Ribosomal RNA large subunit methyltransferase H (Shewanella piezotolerans (strain WP3 / JCM 13877)).